The sequence spans 335 residues: Arylacetonitrilase (335 aa).

Residues 6–291 (LKVAITQAQP…EGIVYADLDM (286 aa)) enclose the CN hydrolase domain. Glu-46 functions as the Proton acceptor in the catalytic mechanism. Lys-127 is a catalytic residue. Catalysis depends on Cys-168, which acts as the Nucleophile.

It belongs to the carbon-nitrogen hydrolase superfamily. Nitrilase family.

It catalyses the reaction a nitrile + 2 H2O = a carboxylate + NH4(+). The enzyme catalyses 4-chlorophenylacetonitrile + 2 H2O = 4-chlorophenylacetate + NH4(+). Its function is as follows. Nitrilase that hydrolyzes preferentially phenylacetonitrile, (R,S)-mandelonitrile, and 3-indolylacetonitrile. The sequence is that of Arylacetonitrilase from Arthroderma benhamiae (strain ATCC MYA-4681 / CBS 112371) (Trichophyton mentagrophytes).